A 488-amino-acid polypeptide reads, in one-letter code: MSTLYIAGAWQAGQGELFHSLNPVTLHVLWSGQGATAEQVDHAVQAARQAFPAWALLSLDQRIAVLDAFAVSLKAHADELANCIGEETGKPLWESATEVTSMVNKIAISVQSYRERTGEKSAPLGDATAVLRHKPHGVVAVFGPYNFPGHLPNGHIVPALLAGNTVLFKPSELTPKVAELTVKCWIEAGLPAGVLNLLQGGRETGIALAANPGIDGLFFTGSSRTGNALHQQFAGRPDKILALEMGGNNPLVVDQVQDIDAAVYTIIQSAFISAGQRCTCARRLLVPEGDWGDALLARLVAVSATLDVGAFDQQPAPFMGSVISLEAARALLDAQRHLLANGAVTLLEMRQPQPGAALLTPGIVDVSAVANRPDVELFGPLLQVVRYAGFDAAIAEANATQYGLAAGLLSDSEARYQQFWLQSRAGIVNWNKQLTGAASSAPFGGVGASGNHRASAYYAADYCAYPVASLETGSLTLPATLTPGVRLS.

NAD(+) is bound at residue glycine 221–glycine 226. Catalysis depends on residues glutamate 244 and cysteine 278.

It belongs to the aldehyde dehydrogenase family. AstD subfamily.

It carries out the reaction N-succinyl-L-glutamate 5-semialdehyde + NAD(+) + H2O = N-succinyl-L-glutamate + NADH + 2 H(+). Its pathway is amino-acid degradation; L-arginine degradation via AST pathway; L-glutamate and succinate from L-arginine: step 4/5. Functionally, catalyzes the NAD-dependent reduction of succinylglutamate semialdehyde into succinylglutamate. The sequence is that of N-succinylglutamate 5-semialdehyde dehydrogenase from Pseudomonas syringae pv. tomato (strain ATCC BAA-871 / DC3000).